We begin with the raw amino-acid sequence, 201 residues long: Dimethylsulfoniopropionate lyase DddQ (201 aa).

A divalent metal cation-binding residues include H130, E134, Y136, and H169.

It belongs to the non-heme iron-dependent dioxygenase family. As to quaternary structure, homodimer. A divalent metal cation is required as a cofactor.

It carries out the reaction S,S-dimethyl-beta-propiothetin = acrylate + dimethyl sulfide + H(+). Its function is as follows. May act as a dimethylsulfoniopropionate (DMSP) in vitro, releasing dimethyl sulfide (DMS). DMS is the principal form by which sulfur is transported from oceans to the atmosphere. The real activity of the protein is however subject to debate and it is unclear whether it constitutes a real dimethylsulfoniopropionate lyase in vivo. The protein is Dimethylsulfoniopropionate lyase DddQ of Ruegeria pomeroyi (strain ATCC 700808 / DSM 15171 / DSS-3) (Silicibacter pomeroyi).